The chain runs to 646 residues: Threonine--tRNA ligase (646 aa).

Residues 1-63 form the TGS domain; sequence MAQISLTFPD…EADAKIAIHT (63 aa). Residues 247–544 form a catalytic region; it reads DHRKLGKEME…LIENYAGKLP (298 aa). Residues Cys-344, His-395, and His-521 each coordinate Zn(2+).

Belongs to the class-II aminoacyl-tRNA synthetase family. In terms of assembly, homodimer. Zn(2+) is required as a cofactor.

Its subcellular location is the cytoplasm. The enzyme catalyses tRNA(Thr) + L-threonine + ATP = L-threonyl-tRNA(Thr) + AMP + diphosphate + H(+). Catalyzes the attachment of threonine to tRNA(Thr) in a two-step reaction: L-threonine is first activated by ATP to form Thr-AMP and then transferred to the acceptor end of tRNA(Thr). Also edits incorrectly charged L-seryl-tRNA(Thr). This is Threonine--tRNA ligase from Cereibacter sphaeroides (strain ATCC 17025 / ATH 2.4.3) (Rhodobacter sphaeroides).